A 577-amino-acid chain; its full sequence is 2-hydroxyacyl-CoA lyase (577 aa).

Glu59 contributes to the thiamine diphosphate binding site. A thiamine pyrophosphate binding region spans residues 412–493 (TMDVGRAVLV…VIVFNNNGVY (82 aa)). Mg(2+) is bound by residues Asp462 and Asn489.

It belongs to the TPP enzyme family. In terms of assembly, homotetramer. Mg(2+) is required as a cofactor. The cofactor is thiamine diphosphate.

The catalysed reaction is an (R)-2-hydroxy-long-chain-fatty acyl-CoA = a long-chain fatty aldehyde + formyl-CoA. The enzyme catalyses a 2-hydroxy-3-methyl fatty acyl-CoA = a 2-methyl-branched fatty aldehyde + formyl-CoA. Its function is as follows. Catalyzes a carbon-carbon cleavage reaction; cleaves a 2-hydroxy-3-methylacyl-CoA into formyl-CoA and a 2-methyl-branched fatty aldehyde. This Oryza sativa subsp. japonica (Rice) protein is 2-hydroxyacyl-CoA lyase.